The following is a 314-amino-acid chain: Acetaldehyde dehydrogenase 2 (314 aa).

Ser-15–Ile-18 is an NAD(+) binding site. Cys-133 functions as the Acyl-thioester intermediate in the catalytic mechanism. Residues Ser-164–Asn-172 and Asn-291 each bind NAD(+).

This sequence belongs to the acetaldehyde dehydrogenase family.

The catalysed reaction is acetaldehyde + NAD(+) + CoA = acetyl-CoA + NADH + H(+). This is Acetaldehyde dehydrogenase 2 from Pseudomonas putida (strain ATCC 700007 / DSM 6899 / JCM 31910 / BCRC 17059 / LMG 24140 / F1).